A 920-amino-acid polypeptide reads, in one-letter code: MAHGEPYYSSKPDKDFNFGSTMARRQMTPTMVAKLPNFVRNSPQAYDWIVRGLIFPTTGKTYFQRVVVITGGLEDGTYGSFVFDGREWVEIYPIEHLNLMSSLKLIHKANALQERLRLSQEEKATLALDVQFLQHENVRLKELIPKPEPRKIQMKWIIVGAVLTFLSLIPGGYAQSQINNTIFTDMIAACKYSTETLTENLDLRIKLALANITISDKLDAVRQILNFAFVPRAHWLRTVFYYIHYYEMWNIFMFVLAIGTVMRSARPGTDLITLATSHLSGFRMAVLPTIPFHTTMTLWVMNTLMVCYYFDNLLAITLAILAPILGIIFLCFMEDSNYVSQIRGLIATAVLIAGGHACLTLTGTTTSLFVVILTCRFIRMATVFIGTRFEIRDANGKVVATVPTRIKNVAFDFFQKLKQSGVRVGVNEFVVIKPGALCVIDTPEGKGTGFFSGNDIVTAAHAVGNNTFVNVCYEGLMYEAKVRYMPEKDIAFITCPGDLHPTARLKLSKNPDYSCVTVMAYVNEDLVVSTAAAMVHGNTLSYAVRTQDGMSGAPVCDKYGRVLAVHQTNTGYTGGAVIIDPTDFHPVKAPSRVELLKEEIERLKAQLNSAAENPATAVTQQPVVTLEQKSVSDSDVVDLVRTAMEREMKVLRDEINGILAPFLQKKKGKTKHGRGRVRRNLRKGVKLLTEEEYRELLEKGLDRETFLDLIDRIIGERSGYPDYDDEDYYDEDDDGWGVVGDDVEFDYTEVINFDQAKPTPAPRTVKPKTCPEPEAETQPLDLSQKKEKQLEHEQQVVKSTKPQKNEPQPYSQTYGKAPIWESYDFDWDEDDAKFILPAPHRLTKADEIVLGSKIVKLRTIIETAIKTQNYSALPEAVFELDKAAYEAGLEGFLQRVKSKNKAPKNYKGPQKTKGPKTITH.

4 consecutive transmembrane segments (helical) span residues 239-259 (VFYY…LAIG), 286-306 (VLPT…TLMV), 313-333 (LLAI…LCFM), and 344-364 (GLIA…LTGT). Active-site charge relay system; for serine protease activity residues include His-461, Asp-489, and Ser-551. O-(5'-phospho-RNA)-tyrosine is present on Tyr-693. Disordered regions lie at residues 753–813 (FDQA…YSQT) and 900–920 (NKAP…TITH). Residues 783 to 795 (SQKKEKQLEHEQQ) show a composition bias toward basic and acidic residues. Polar residues predominate over residues 800–813 (TKPQKNEPQPYSQT).

Belongs to the astroviridae polyprotein 1A family. In terms of assembly, monomer. Cleaved by the viral and host proteases. The protease is probably autocatalytically cleaved. Post-translationally, cleaved presumably by viral and host proteases.

It is found in the host membrane. The catalysed reaction is RNA(n) + a ribonucleoside 5'-triphosphate = RNA(n+1) + diphosphate. Responsible for the cleavage of the polyprotein into functional products. Functionally, covalently attached to the 5' extremity of the genomic and subgenomic RNAs. It may serve as a primer for the replicase. The chain is Non-structural polyprotein 1A (ORF1) from Human astrovirus-4 (HAstV-4).